A 205-amino-acid polypeptide reads, in one-letter code: Ribonuclease HII (205 aa).

The RNase H type-2 domain occupies 1–205; it reads MLVCGVDEAG…RPARLIEAGG (205 aa). A divalent metal cation contacts are provided by D7, E8, and D105.

Belongs to the RNase HII family. The cofactor is Mn(2+). Mg(2+) is required as a cofactor.

The protein resides in the cytoplasm. The catalysed reaction is Endonucleolytic cleavage to 5'-phosphomonoester.. Endonuclease that specifically degrades the RNA of RNA-DNA hybrids. This chain is Ribonuclease HII, found in Cenarchaeum symbiosum (strain A).